Here is a 595-residue protein sequence, read N- to C-terminus: MKTILLFALSLLLSLSVSDVCAQERVYDISQFGLKANSKKNASPVVRKAIAKIKAECRDGEKVILRFPAGRYNFHEAGSTVREYYISNHDQDNPKKVGIALEDMKNLTIDGQGSEFVFYGRMIPVSLLRSENCVLKNFSIDFEQPHIAQVQVVENDPEKGITFEPAPWVDYRISKDSVFEGLGEGWVMRYSWGIAFDGKTKHVVYNTSDIGCPTKGAFEVAPRRICSPKWKDARLVPGTVVAMRGWGRPTPGIFMSHDVNTSLLDVKVHYAEGMGLLAQLCEDITLDGFGVCLKGDNDPRYFTTQADATHFSGCKGKIVSKNGLYEGMMDDAINVHGTYLKVIKRVDDHTLIGRYMHDQSWGFEWGRPGDDVQFVRSETMELIGKQNQITAIRPYDKGEIRGAREFSITFKEAIDPAINEKSGFGIENLTWTPEVLFAGNTIRNNRARGTLFSTPKKTVVEDNLFDHTSGTAILLCGDCNGWFETGACRDVTIRRNRFINALTNMFQFTNAVISIYPEIPNLKDQQKYFHGGKDGGIVIEDNEFDTFDAPILYAKSVDGLIFRNNVIKTNTEFKPFHWNKDRFLLERVTNVKISE.

Positions 1–22 are cleaved as a signal peptide; the sequence is MKTILLFALSLLLSLSVSDVCA. PbH1 repeat units follow at residues 432–454, 455–477, and 488–541; these read TPEVLFAGNTIRNNRARGTLFST, PKKTVVEDNLFDHTSGTAILLCG, and CRDV…VIED.

The protein belongs to the glycosyl hydrolase 110 family. B subfamily.

It carries out the reaction Hydrolysis of terminal, non-reducing branched (1-&gt;3)-alpha-D-galactosidic residues, producing free D-galactose.. The catalysed reaction is Hydrolysis of terminal, non-reducing linear (1-&gt;3)-alpha-D-galactosidic residues, producing free D-galactose.. It catalyses the reaction Hydrolysis of terminal, non-reducing alpha-D-galactose residues in alpha-D-galactosides, including galactose oligosaccharides, galactomannans and galactolipids.. In terms of biological role, alpha-galactosidase. Removes both branched alpha-1,3-linked galactose residues of blood group B antigens and linear alpha-1,3-linked galactose structures. In Bacteroides fragilis (strain ATCC 25285 / DSM 2151 / CCUG 4856 / JCM 11019 / LMG 10263 / NCTC 9343 / Onslow / VPI 2553 / EN-2), this protein is Alpha-1,3-galactosidase B (glaB).